Here is a 501-residue protein sequence, read N- to C-terminus: Adenylosuccinate synthetase 2, chloroplastic (501 aa).

Residues 87–93 and 115–117 each bind GTP; these read GDEGKGK and GHT. Aspartate 88 functions as the Proton acceptor in the catalytic mechanism. 2 residues coordinate Mg(2+): aspartate 88 and glycine 115. Residues 88–91, 113–116, threonine 205, arginine 219, glutamine 300, threonine 315, and arginine 379 contribute to the IMP site; these read DEGK and NAGH. Residue histidine 116 is the Proton donor of the active site. 375–381 serves as a coordination point for substrate; it reads NITGRPR. GTP-binding positions include arginine 381, 407–409, and 490–492; these read KLD and GIG.

The protein belongs to the adenylosuccinate synthetase family. Homodimer. It depends on Mg(2+) as a cofactor.

It is found in the plastid. The protein localises to the chloroplast. The catalysed reaction is IMP + L-aspartate + GTP = N(6)-(1,2-dicarboxyethyl)-AMP + GDP + phosphate + 2 H(+). The protein operates within purine metabolism; AMP biosynthesis via de novo pathway; AMP from IMP: step 1/2. Plays an important role in the de novo pathway and in the salvage pathway of purine nucleotide biosynthesis. Catalyzes the first committed step in the biosynthesis of AMP from IMP. The polypeptide is Adenylosuccinate synthetase 2, chloroplastic (Capsicum frutescens (Cayenne pepper)).